The chain runs to 323 residues: Chitinase 1 (323 aa).

An N-terminal signal peptide occupies residues 1–20 (MRALAVVVVATAFAVVAVRG). The 41-residue stretch at 21–61 (EQCGSQAGGALCPNCLCCSQYGWCGSTSAYCGSGCQSQCSG) folds into the Chitin-binding type-1 domain. 8 cysteine pairs are disulfide-bonded: C23–C38, C32–C44, C35–C63, C37–C51, C55–C59, C100–C162, C176–C184, and C283–C315. E144 acts as the Proton donor in catalysis.

Belongs to the glycosyl hydrolase 19 family. Chitinase class I subfamily. In terms of tissue distribution, expressed in roots, leaves, sheaths and meristems.

The enzyme catalyses Random endo-hydrolysis of N-acetyl-beta-D-glucosaminide (1-&gt;4)-beta-linkages in chitin and chitodextrins.. Functionally, hydrolyzes chitin and may play a role in defense against fungal pathogens containing chitin. The protein is Chitinase 1 (Cht1) of Oryza sativa subsp. japonica (Rice).